The following is a 78-amino-acid chain: MADDMERIFKRFDTNGDGKISLSELTDALRTLGSTSADEVQRMMAEIDTDGDGFIDFNEFISFCNANPGLMKDVAKVF.

EF-hand domains lie at 1 to 35 (MADD…LGST) and 35 to 70 (TSAD…NPGL). Residues Asp13, Asn15, Asp17, Lys19, Glu24, Asp48, Asp50, Asp52, and Glu59 each contribute to the Ca(2+) site.

In terms of assembly, monomer. In terms of tissue distribution, specifically expressed in pollen.

Functionally, may be involved in the regulation of pollen-tube growth. In Phleum pratense (Common timothy), this protein is Polcalcin Phl p 7.